We begin with the raw amino-acid sequence, 100 residues long: Urease subunit gamma (100 aa).

This sequence belongs to the urease gamma subunit family. In terms of assembly, heterotrimer of UreA (gamma), UreB (beta) and UreC (alpha) subunits. Three heterotrimers associate to form the active enzyme.

Its subcellular location is the cytoplasm. The enzyme catalyses urea + 2 H2O + H(+) = hydrogencarbonate + 2 NH4(+). It participates in nitrogen metabolism; urea degradation; CO(2) and NH(3) from urea (urease route): step 1/1. The protein is Urease subunit gamma of Cereibacter sphaeroides (strain ATCC 17025 / ATH 2.4.3) (Rhodobacter sphaeroides).